The following is a 254-amino-acid chain: Imidazole glycerol phosphate synthase subunit HisF (254 aa).

Active-site residues include Asp11 and Asp130.

The protein belongs to the HisA/HisF family. Heterodimer of HisH and HisF.

Its subcellular location is the cytoplasm. It catalyses the reaction 5-[(5-phospho-1-deoxy-D-ribulos-1-ylimino)methylamino]-1-(5-phospho-beta-D-ribosyl)imidazole-4-carboxamide + L-glutamine = D-erythro-1-(imidazol-4-yl)glycerol 3-phosphate + 5-amino-1-(5-phospho-beta-D-ribosyl)imidazole-4-carboxamide + L-glutamate + H(+). Its pathway is amino-acid biosynthesis; L-histidine biosynthesis; L-histidine from 5-phospho-alpha-D-ribose 1-diphosphate: step 5/9. Its function is as follows. IGPS catalyzes the conversion of PRFAR and glutamine to IGP, AICAR and glutamate. The HisF subunit catalyzes the cyclization activity that produces IGP and AICAR from PRFAR using the ammonia provided by the HisH subunit. The sequence is that of Imidazole glycerol phosphate synthase subunit HisF from Oceanobacillus iheyensis (strain DSM 14371 / CIP 107618 / JCM 11309 / KCTC 3954 / HTE831).